We begin with the raw amino-acid sequence, 354 residues long: S-adenosylmethionine:tRNA ribosyltransferase-isomerase (354 aa).

It belongs to the QueA family. As to quaternary structure, monomer.

It localises to the cytoplasm. It catalyses the reaction 7-aminomethyl-7-carbaguanosine(34) in tRNA + S-adenosyl-L-methionine = epoxyqueuosine(34) in tRNA + adenine + L-methionine + 2 H(+). The protein operates within tRNA modification; tRNA-queuosine biosynthesis. Functionally, transfers and isomerizes the ribose moiety from AdoMet to the 7-aminomethyl group of 7-deazaguanine (preQ1-tRNA) to give epoxyqueuosine (oQ-tRNA). This Pseudomonas syringae pv. tomato (strain ATCC BAA-871 / DC3000) protein is S-adenosylmethionine:tRNA ribosyltransferase-isomerase.